The chain runs to 5495 residues: MGDQPKATTTATGGAAGPVPEGDAVMATTNQDALAKGAGDGPAQDAAQEPGQAEHGEPGDGGDGGDDGATDAGASSLPPSEIGGRAPLDTACSDADGGAPSSLAGGIVGPPSPLTGCYLLIVLGEPHSEEHKDNILQHLLKGFLSWDVSDCHVDLEEELNTITQHAPEGEEARHGERLIQYASENLVTEVLIHPQYNTLIQCMRNLLSSFTRHRHIIHAGYTFSGNGSWILQDGTFSVADFSEAFQEHDVQRVIRAYADTITMNIHCADAGLWHTLPEKAFARQCRIRINPVDVLDTSSECINGFIDYLAPMVMPTSLRELLETSDVVGNIRFTHPTLYVFPGGQGDAALFGINGFNMLVDGGFNRKACFWDFARHLDRLDAVLMTRLNNSNVQGLGAVVSRKRDAHVYPQIGHFFGNVPDRKGLPSPDGDKDRDPLLIDLFERGHGIVSDLKALDLKPQCCYRNQEPVNLYHKVGHGTLDMYVISPARDSKEVKEFLQKWHAGDQRLFAARDSRDFNFPLQNLVSICALLVWQPANPDDTITRILFPGSTPDFKIQEGLEKLKHLEFMKHSTCTAKSIAPAIQTVTSTRKSLKSAIEATPAPPSASYKTTKFSPVASAALAVQHPQQQDNKAKEAAAAAAAAAAAAASAATIARAKADSMDTDAEPEHEADPEPADTGDEAAPTEQEPEAETEPEPEHEPEAEQDKDVGEEKKVEVLIMKPQQATPAVIAASGKDGVDAASADATPTGKLSKASAKGKADKPRAEVKPVVRSRIDTKPPKSMDRKLAKRDEKKSSPTTTPAARAPVAQNAKPKVLSRPATKSSPSSTPAKSAKEANNRKVLESKQQAARVQATSTVSRRVTSTASERRVQQQAEAKTAATGATQATQRKPISRRPRGVSPSKRAPAPGSPVKQAKPKAADLKKTRLDKGGTTDSSLVSTPSADEATAAKKLQDLTASQELDAEKQRELDDLKEEQEVVREIEAVFSRDEMKRQQHQQIKAELREMPAEGTGDGENEPDEEEEYLIIEKEEVEQYTEDSIVEQESSMTKEEEIQKHQRDSQESEKKRKKSAEEEIEAAIAKVEAAERKARLEGASARQDESELDVEPEQSKIKAEVQDIIATAKDIAKSRTEEQLAKPAEEELSSPTPEEKLSKKTSDTKDDQIGAPVDVLPVNLQESLPEEKFSATIESGATTAPTLPEDERIPLDQIKEDLVIEEKYVKEETKEAEAIVVATVQTLPEAAPLAIDTILASATKDAPKDANAEALGELPDSGERVLPMKMTFEAQQNLLRDVIKTPDEVADLPVHEEADLGLYEKDSQDAGAKSISHKEESAKEEKETDDEKENKVGEIELGDEPNKVDISHVLLKESVQEVAEKVVVIETTVEKKQEEIVEATTVITQENQEDLMEQVKDKEEHEQKIESGIITEKEAKKSASTPEEKETSDITSDDELPAQLADPTTVPPKSAKDREDTGSIESPPTIEEAIEVEVQAKQEAQKPVPAPEEAIKTEKSPLASKETSRPESATGSVKEDTEQTKSKKSPVPSRPESEAKDKKSPFASGEASRPESVAESVKDEAGKAESRRESIAKTHKDESSLDKAKEQESRRESLAESIKPESGIDEKSALASKEASRPESVTDKSKEPSRRESIAESLKAESTKDEKSAPPSKEASRPGSVVESVKDETEKSKEPSRRESIAESAKPPIEFREVSRPESVIDGIKDESAKPESRRDSPLASKEASRPESVLESVKDEPIKSTEKSRRESVAESFKADSTKDEKSPLTSKDISRPESAVENVMDAVGSAERSQPESVTASRDVSRPESVAESEKDDTDKPESVVESVIPASDVVEIEKGAADKEKGVFVSLEIGKPDSPSEVISRPGPVVESVKPESRRESSTEIVLPCHAEDSKEPSRPESKVECLKDESEVLKGSTRRESVAESDKSSQPFKETSRPESAVGSMKDESMSKEPSRRESVKDGAAQSRETSRPASVAESAKDGADDLKELSRPESTTQSKEAGSIKDEKSPLASEEASRPASVAESVKDEAEKSKEESRRESVAEKSPLPSKEASRPASVAESIKDEAEKSKEESRRESVAEKSPLPSKEASRPASVAESIKDEAEKSKEESRRESVAEKSPLPSKEASRPASVAESIKDEAEKSKEESRRESVAEKSPLPSKEASRPASVAESIKDEAEKSKEESRRESVAEKSPLPSKEASRPASVAESIKDEAEKSKEESRRESVAEKSPLPSKEASRPASVAESIKDEAEKSKEESRRESVAEKSPLPSKEASRPASVAESIKDEAEKSKEETRRESVAEKSPLPSKEASRPASVAESIKDEAEKSKEESRRESAAEKSPLPSKEASRPASVAESVKDEADKSKEESRRESMAESGKAQSIKGDQSPLKEVSRPESVAESVKDDPVKSKEPSRRESVAGSVTADSARDDQSPLESKGASRPESVVDSVKDEAEKQESRRESKTESVIPPKAKDDKSPKEVLQPVSMTETIREDADQPMKPSQAESRRESIAESIKASSPRDEKSPLASKEASRPGSVAESIKYDLDKPQIIKDDKSTEHSRRESLEDKSAVTSEKSVSRPLSVASDHEAAVAIEDDAKSSISPKDKSRPGFVAETVSSPIEEATMEFSKIEVVEKSSLALSLQGGSGGKLQTDSSPVDVAEGDFSHAVASVSTVTPTLTKPAELAQIGAAKTVSSPLDEALRTPSAPEHISRADSPAECASEEIASQDKSPQVLKESSRPAWVAESKDDAAQLKSSVEDLRSPVASTEISRPASAGETASSPIEEAPKDFAEFEQAEKAVLPLTIELKGNLPTLSSPVDVAHGDFPQTSTPTSSPTVASVQPAELSKVDIEKTASSPIDEAPKSLIGCPAEERPESPAESAKDAAESVEKSKDASRPPSVVESTKADSTKGDISPSPESVLEGPKDDVEKSKESSRPPSVSASITGDSTKDVSRPASVVESVKDEHDKAESRRESIAKVESVIDEAGKSDSKSSSQDSQKDEKSTLASKEASRRESVVESSKDDAEKSESRPESVIASGEPVPRESKSPLDSKDTSRPGSMVESVTAEDEKSEQQSRRESVAESVKADTKKDGKSQEASRPSSVDELLKDDDEKQESRRQSITGSHKAMSTMGDESPMDKADKSKEPSRPESVAESIKHENTKDEESPLGSRRDSVAESIKSDITKGEKSPLPSKEVSRPESVVGSIKDEKAESRRESVAESVKPESSKDATSAPPSKEHSRPESVLGSLKDEGDKTTSRRVSVADSIKDEKSLLVSQEASRPESEAESLKDAAAPSQETSRPESVTESVKDGKSPVASKEASRPASVAENAKDSADESKEQRPESLPQSKAGSIKDEKSPLASKDEAEKSKEESRRESVAEQFPLVSKEVSRPASVAESVKDEAEKSKEESPLMSKEASRPASVAGSVKDEAEKSKEESRRESVAEKSPLPSKEASRPASVAESVKDEADKSKEESRRESGAEKSPLASKEASRPASVAESIKDEAEKSKEESRRESVAEKSPLPSKEASRPTSVAESVKDEAEKSKEESRRDSVAEKSPLASKEASRPASVAESVQDEAEKSKEESRRESVAEKSPLASKEASRPASVAESIKDEAEKSKEESRRESVAEKSPLASKEASRPTSVAESVKDEAEKSKEESSRDSVAEKSPLASKEASRPASVAESVQDEAEKSKEESRRESVAEKSPLASKEASRPASVAESVKDDAEKSKEESRRESVAEKSPLASKEASRPASVAESVKDEAEKSKEESRRESVAEKSPLPSKEASRPTSVAESVKDEAEKSKEESRRESVAEKSSLASKKASRPASVAESVKDEAEKSKEESRRESVAEKSPLASKEASRPASVAESVKDEAEKSKEESRRESVAEKSPLPSKEASRPTSVAESVKDEADKSKEESRRESGAEKSPLASMEASRPTSVAESVKDETEKSKEESRRESVTEKSPLPSKEASRPTSVAESVKDEAEKSKEESRRESVAEKSPLASKESSRPASVAESIKDEAEGTKQESRRESMPESGKAESIKGDQSSLASKETSRPDSVVESVKDETEKPEGSAIDKSQVASRPESVAVSAKDEKSPLHSRPESVADKSPDASKEASRSLSVAETASSPIEEGPRSIADLSLPLNLTGEAKGKLPTLSSPIDVAEGDFLEVKAESSPRPAVLSKPAEFSQPDTGHTASTPVDEASPVLEEIEVVEQHTTSGVGATGATAETDLLDLTETKSETVTKQSETTLFETLTSKVESKVEVLESSVKQVEEKVQTSVKQAETTVTDSLEQLTKKSSEQLTEIKSVLDTNFEEVAKIVADVAKVLKSDKDITDIIPDFDERQLEEKLKSTADTEEESDKSTRDEKSLEISVKVEIESEKSSPDQKSGPISIEEKDKIEQSEKAQLRQGILTSSRPESVASQPESVPSPSQSAASHEHKEVELSESHKAEKSSRPESVASQVSEKDMKTSRPASSTSQFSTKEGDEETTESLLHSLTTTETVETKQMEEKSSFESVSTSVTKSTVLSSQSTVQLREESTSESLSSSLKVEDSSRRESLSSLLAEKGGIATNTSLKEDTSASASQLEELLVQSEECSSESIVSEIQTSIAQKSNKEIKDARETKVTSQFTTTTSSATKDDSLKETVAEFLATEKIVSAKEAFSTEATKSADDCLKKTTASAVSSTSASQRALFVGTDESRRESLLSQASESRLTHSDPEDEEPADDVDERSSVKESRSKSIATIMMTSIYKPSEDMEPISKLVEEEHEHVEELAQEVTSTSKTTTLLQSSEQSSTTTSSTSKTGASRVESITLTQMDQQTSQSQGDPADRKTPPTAPVSPGVKAMSSTGSAGSVIGAGAGAVAAGGKCESSAASIVSSSGPMSPKDISGKSSPGALTSESQSIPTPLGRESHTDTPESSPKPTSPFPRVSKDELKSLEMQHHSQEQMLAGAAAAAGAECEGDIPELHELRGLECTTALSGSTDKIITTTITTVTKVISADGKEIVTEQKTVTTTDSSEPDSEKVVVTTTRTTSESERDQLLPKEVALLRGLYRASTPGSEDDEDLLLGSPRSATSYELQHSSSGVSKRSDLDADGDESQDDIPPQYGSEEHSTARSILLPRTADPMATSFYGALPDSFDVVMKPSTEPIPIQGAPSGDSQSSESVESSSQTWAGHKFLDQADKDFQRALEEHVQARGAEVMSSVTAKYSYSPSKAEEMEQIVSGTAERQRFPLSDVQRARVAESGFATVGSVASQQQQQEKGGEVEQAVPTTTAVTASTTATASSTGALPKDRLEEWGKPLGLPSPAPLPVEGGADIRTTPKKERRLVATKTRLNNEKNLRRRSESPNKAGKKPAPVYVDLTYVPHNGNSYYAHVDFFKRVRARYYVFSGTEPSRQVYDALLEAKQTWEDKELEVTIIPTYDTDVLGYWVAENEELLAKHRIDLSPSASRCTINLQDHETSCSAYRLEF.

Disordered regions lie at residues 1–97 (MGDQ…DADG), 656–975 (AKAD…LKEE), 988–1074 (RDEM…AEEE), 1086–1111 (ERKARLEGASARQDESELDVEPEQSK), 1128–1167 (KSRTEEQLAKPAEEELSSPTPEEKLSKKTSDTKDDQIGAP), 1185–1204 (SATIESGATTAPTLPEDERI), 1255–1275 (KDAPKDANAEALGELPDSGER), 1306–1358 (HEEA…EPNK), 1402–1840 (NQED…VVES), 1866–2631 (EIGK…PGFV), 2709–2810 (AKTV…KDFA), 2830–4166 (LPTL…DLSL), 4196–4230 (KAESSPRPAVLSKPAEFSQPDTGHTASTPVDEASP), 4362–4612 (IIPD…ASQL), 4636–4668 (AQKSNKEIKDARETKVTSQFTTTTSSATKDDSL), 4687–4975 (AFST…QMLA), 5035–5065 (KTVTTTDSSEPDSEKVVVTTTRTTSESERDQ), 5101–5138 (SYELQHSSSGVSKRSDLDADGDESQDDIPPQYGSEEHS), 5170–5199 (PSTEPIPIQGAPSGDSQSSESVESSSQTWA), and 5328–5350 (GLPSPAPLPVEGGADIRTTPKKE). Residues 35-48 (AKGAGDGPAQDAAQ) show a composition bias toward low complexity. 3 stretches are compositionally biased toward basic and acidic residues: residues 656 to 672 (AKADSMDTDAEPEHEAD), 696 to 716 (EPEHEPEAEQDKDVGEEKKVE), and 758 to 795 (GKADKPRAEVKPVVRSRIDTKPPKSMDRKLAKRDEKKS). Low complexity-rich tracts occupy residues 797-806 (PTTTPAARAP) and 819-831 (PATKSSPSSTPAK). Residues 832-843 (SAKEANNRKVLE) are compositionally biased toward basic and acidic residues. Over residues 850–888 (RVQATSTVSRRVTSTASERRVQQQAEAKTAATGATQATQ) the composition is skewed to low complexity. Over residues 918 to 931 (KAADLKKTRLDKGG) the composition is skewed to basic and acidic residues. The segment covering 932 to 942 (TTDSSLVSTPS) has biased composition (polar residues). Basic and acidic residues-rich tracts occupy residues 962 to 975 (DAEKQRELDDLKEE) and 988 to 1007 (RDEMKRQQHQQIKAELREMP). Acidic residues predominate over residues 1012-1041 (GDGENEPDEEEEYLIIEKEEVEQYTEDSIV). Residues 1047 to 1065 (MTKEEEIQKHQRDSQESEK) show a composition bias toward basic and acidic residues. Basic and acidic residues-rich tracts occupy residues 1128–1140 (KSRTEEQLAKPAE) and 1148–1163 (PEEKLSKKTSDTKDDQ). Over residues 1187-1196 (TIESGATTAP) the composition is skewed to polar residues. Basic and acidic residues-rich tracts occupy residues 1306-1319 (HEEADLGLYEKDSQ), 1327-1337 (SHKEESAKEEK), 1343-1358 (KENKVGEIELGDEPNK), and 1408-1443 (EQVKDKEEHEQKIESGIITEKEAKKSASTPEEKETS). 2 repeat units span residues 1469 to 1502 (REDTGSIESPPTIEEAIEVEVQAKQEAQKPVPAP) and 1513 to 1539 (LASKETSRPESATGSVKEDTEQTKSKK). Positions 1469-4032 (REDTGSIESP…SPLASKESSR (2564 aa)) are 53 X approximate repeat. 5 stretches are compositionally biased toward basic and acidic residues: residues 1546 to 1555 (PESEAKDKKS), 1571 to 1663 (SVKD…DEKS), 1679 to 1696 (SVKDETEKSKEPSRRESI), 1718 to 1732 (GIKDESAKPESRRDS), and 1748 to 1779 (SVKDEPIKSTEKSRRESVAESFKADSTKDEKS). Tandem repeats lie at residues 1622 to 1649 (KSALASKEASRPESVTDKSKEPSRRESI), 1660 to 1686 (DEKSAPPSKEASRPGSVVESVKDETEK), 1690 to 1718 (PSRRESIAESAKPPIEFREVSRPESVIDG), 1755 to 1782 (KSTEKSRRESVAESFKADSTKDEKSPLT), 1790 to 1818 (ESAVENVMDAVGSAERSQPESVTASRDVS), 1837 to 1865 (VVESVIPASDVVEIEKGAADKEKGVFVSL), 1874 to 1902 (SEVISRPGPVVESVKPESRRESSTEIVLP), 1911 to 1939 (PSRPESKVECLKDESEVLKGSTRRESVAE), 1948 to 1976 (KETSRPESAVGSMKDESMSKEPSRRESVK), 1985 to 2013 (TSRPASVAESAKDGADDLKELSRPESTTQ), 2022 to 2050 (DEKSPLASEEASRPASVAESVKDEAEKSK), 2059 to 2087 (AEKSPLPSKEASRPASVAESIKDEAEKSK), 2096 to 2124 (AEKSPLPSKEASRPASVAESIKDEAEKSK), 2133 to 2161 (AEKSPLPSKEASRPASVAESIKDEAEKSK), 2170 to 2198 (AEKSPLPSKEASRPASVAESIKDEAEKSK), 2215 to 2243 (KEASRPASVAESIKDEAEKSKEESRRESV), and 2262 to 2292 (ESIKDEAEKSKEESRRESVAEKSPLPSKEAS). Residues 1804-1815 (ERSQPESVTASR) are compositionally biased toward polar residues. 18 stretches are compositionally biased toward basic and acidic residues: residues 1887–1896 (VKPESRRESS), 1904–1942 (HAEDSKEPSRPESKVECLKDESEVLKGSTRRESVAESDK), 1960–1976 (MKDESMSKEPSRRESVK), 1994–2007 (SAKDGADDLKELSR), 2041–2059 (SVKDEAEKSKEESRRESVA), 2078–2096 (SIKDEAEKSKEESRRESVA), 2115–2133 (SIKDEAEKSKEESRRESVA), 2152–2170 (SIKDEAEKSKEESRRESVA), 2189–2207 (SIKDEAEKSKEESRRESVA), 2226–2244 (SIKDEAEKSKEESRRESVA), 2263–2281 (SIKDEAEKSKEESRRESVA), 2300–2318 (SIKDEAEKSKEETRRESVA), 2337–2355 (SIKDEAEKSKEESRRESAA), 2374–2391 (SVKDEADKSKEESRRESM), 2419–2435 (SVKDDPVKSKEPSRRES), 2466–2482 (SVKDEAEKQESRRESKT), 2560–2588 (IKYDLDKPQIIKDDKSTEHSRRESLEDKS), and 2604–2627 (SDHEAAVAIEDDAKSSISPKDKSR). Repeat unit 20 spans residues 2355-2391 (AEKSPLPSKEASRPASVAESVKDEADKSKEESRRESM). Repeat copies occupy residues 2703–2726 (LAQIGAAKTVSSPLDEALRTPSAP) and 2761–2787 (WVAESKDDAAQLKSSVEDLRSPVASTE). Positions 2764 to 2780 (ESKDDAAQLKSSVEDLR) are enriched in basic and acidic residues. Serine 2800 is subject to Phosphoserine; by GSK3-beta. 3 consecutive repeat copies span residues 2820–2846 (LPLTIELKGNLPTLSSPVDVAHGDFPQ), 2864–2892 (LSKVDIEKTASSPIDEAPKSLIGCPAEER), and 2907–2933 (VEKSKDASRPPSVVESTKADSTKGDIS). A compositionally biased stretch (low complexity) spans 2845-2861 (PQTSTPTSSPTVASVQP). 2 stretches are compositionally biased toward basic and acidic residues: residues 2889–2914 (AEERPESPAESAKDAAESVEKSKDAS) and 2942–2954 (GPKDDVEKSKESS). Positions 2955–2966 (RPPSVSASITGD) are enriched in polar residues. Tandem repeats lie at residues 2956–2987 (PPSVSASITGDSTKDVSRPASVVESVKDEHDK), 3006–3034 (GKSDSKSSSQDSQKDEKSTLASKEASRRE), 3049–3075 (SRPESVIASGEPVPRESKSPLDSKDTS), 3089–3117 (EKSEQQSRRESVAESVKADTKKDGKSQEA), 3131–3158 (DEKQESRRQSITGSHKAMSTMGDESPMD), 3200–3224 (KSDITKGEKSPLPSKEVSRPESVVG), 3228–3256 (DEKAESRRESVAESVKPESSKDATSAPPS), 3265–3293 (VLGSLKDEGDKTTSRRVSVADSIKDEKSL), 3302–3330 (PESEAESLKDAAAPSQETSRPESVTESVK), 3339–3367 (KEASRPASVAENAKDSADESKEQRPESLP), 3376–3404 (DEKSPLASKDEAEKSKEESRRESVAEQFP), 3413–3441 (PASVAESVKDEAEKSKEESPLMSKEASRP), 3450–3478 (DEAEKSKEESRRESVAEKSPLPSKEASRP), 3487–3515 (DEADKSKEESRRESGAEKSPLASKEASRP), 3524–3552 (DEAEKSKEESRRESVAEKSPLPSKEASRP), 3561–3589 (DEAEKSKEESRRDSVAEKSPLASKEASRP), 3598–3626 (DEAEKSKEESRRESVAEKSPLASKEASRP), 3635–3663 (DEAEKSKEESRRESVAEKSPLASKEASRP), 3672–3700 (DEAEKSKEESSRDSVAEKSPLASKEASRP), 3709–3737 (DEAEKSKEESRRESVAEKSPLASKEASRP), 3746–3774 (DDAEKSKEESRRESVAEKSPLASKEASRP), 3783–3811 (DEAEKSKEESRRESVAEKSPLPSKEASRP), 3820–3848 (DEAEKSKEESRRESVAEKSSLASKKASRP), 3867–3894 (RRESVAEKSPLASKEASRPASVAESVKD), 3895–3921 (EAEKSKEESRRESVAEKSPLPSKEASR), 3931–3958 (DEADKSKEESRRESGAEKSPLASMEASR), 3968–3995 (DETEKSKEESRRESVTEKSPLPSKEASR), and 4005–4032 (DEAEKSKEESRRESVAEKSPLASKESSR). Basic and acidic residues-rich tracts occupy residues 2980 to 2996 (SVKDEHDKAESRRESIA), 3017 to 3051 (SQKDEKSTLASKEASRRESVVESSKDDAEKSESRP), 3061 to 3075 (VPRESKSPLDSKDTS), 3087 to 3116 (EDEKSEQQSRRESVAESVKADTKKDGKSQE), 3156 to 3168 (PMDKADKSKEPSR), 3175 to 3208 (SIKHENTKDEESPLGSRRDSVAESIKSDITKGEK), and 3226 to 3248 (IKDEKAESRRESVAESVKPESSK). Phosphoserine occurs at positions 3067, 3071, and 3075. Residues 3300-3310 (SRPESEAESLK) are compositionally biased toward basic and acidic residues. The span at 3316-3327 (SQETSRPESVTE) shows a compositional bias: polar residues. Basic and acidic residues-rich tracts occupy residues 3350–3363 (NAKDSADESKEQRP), 3373–3399 (SIKDEKSPLASKDEAEKSKEESRRESV), 3419–3431 (SVKDEAEKSKEES), 3448–3465 (VKDEAEKSKEESRRESVA), 3484–3502 (SVKDEADKSKEESRRESGA), 3521–3539 (SIKDEAEKSKEESRRESVA), 3558–3576 (SVKDEAEKSKEESRRDSVA), 3599–3613 (EAEKSKEESRRESVA), 3632–3650 (SIKDEAEKSKEESRRESVA), 3669–3687 (SVKDEAEKSKEESSRDSVA), 3710–3724 (EAEKSKEESRRESVA), 3743–3761 (SVKDDAEKSKEESRRESVA), 3780–3798 (SVKDEAEKSKEESRRESVA), and 3817–3835 (SVKDEAEKSKEESRRESVA). Over residues 3836 to 3850 (EKSSLASKKASRPAS) the composition is skewed to low complexity. Basic and acidic residues-rich tracts occupy residues 3854-3872 (SVKDEAEKSKEESRRESVA), 3891-3909 (SVKDEAEKSKEESRRESVA), 3928-3946 (SVKDEADKSKEESRRESGA), 3965-3983 (SVKDETEKSKEESRRESVT), 4002-4020 (SVKDEAEKSKEESRRESVA), 4039-4066 (SIKDEAEGTKQESRRESMPESGKAESIK), 4086-4095 (SVKDETEKPE), and 4115-4141 (AKDEKSPLHSRPESVADKSPDASKEAS). 2 stretches are compositionally biased toward polar residues: residues 4142–4152 (RSLSVAETASS) and 4214–4223 (QPDTGHTAST). Composition is skewed to basic and acidic residues over residues 4362 to 4379 (IIPDFDERQLEEKLKSTA), 4386 to 4410 (DKSTRDEKSLEISVKVEIESEKSSP), and 4419 to 4432 (IEEKDKIEQSEKAQ). The span at 4443–4461 (PESVASQPESVPSPSQSAA) shows a compositional bias: low complexity. The segment covering 4462–4481 (SHEHKEVELSESHKAEKSSR) has biased composition (basic and acidic residues). A compositionally biased stretch (polar residues) spans 4498–4508 (RPASSTSQFST). Residues 4517-4528 (ESLLHSLTTTET) show a composition bias toward low complexity. Residues 4529-4539 (VETKQMEEKSS) show a composition bias toward basic and acidic residues. Residues 4540–4560 (FESVSTSVTKSTVLSSQSTVQ) are compositionally biased toward low complexity. Basic and acidic residues-rich tracts occupy residues 4575-4584 (KVEDSSRRES) and 4639-4650 (SNKEIKDARETK). Composition is skewed to low complexity over residues 4651-4662 (VTSQFTTTTSSA) and 4703-4714 (TTASAVSSTSAS). The span at 4744 to 4754 (PEDEEPADDVD) shows a compositional bias: acidic residues. Composition is skewed to basic and acidic residues over residues 4755 to 4764 (ERSSVKESRS) and 4788 to 4798 (LVEEEHEHVEE). Over residues 4804 to 4829 (TSTSKTTTLLQSSEQSSTTTSSTSKT) the composition is skewed to low complexity. Polar residues predominate over residues 4835 to 4851 (ESITLTQMDQQTSQSQG). Residues 4875 to 4905 (GSAGSVIGAGAGAVAAGGKCESSAASIVSSS) show a composition bias toward low complexity. A compositionally biased stretch (polar residues) spans 4915-4930 (GKSSPGALTSESQSIP). Position 4950 is a phosphoserine; by GSK3-beta (serine 4950). Residues 4955 to 4970 (VSKDELKSLEMQHHSQ) are compositionally biased toward basic and acidic residues. A compositionally biased stretch (polar residues) spans 5101–5112 (SYELQHSSSGVS). Low complexity predominate over residues 5185-5196 (SQSSESVESSSQ).

In terms of assembly, heterodimer of a heavy and a light chain. Interacts with Fmr1. Found in a complex with tubulin and Futsch. In terms of processing, several minor light chains can be created with markedly different pIs. Post-translationally, phosphorylated by SGG/GSK3. Phosphorylated by LRRK2 at the presynapse of neuromuscular junctions, which negatively regulates the activity controlling synaptic differentiation. Neuronal cells within the PNS and CNS.

Its subcellular location is the cytoplasm. It is found in the cytoskeleton. Its function is as follows. During embryogenesis, necessary for dendritic and axonal organization and growth at the neuromuscular junction through the regulation of the synaptic microtubule cytoskeleton. Microtubule hairpin loops are found within a small subset of synaptic boutons at the neuromuscular synapse, these loops are stabilized by futsch. Loop morphology and dynamics suggest that rearrangement of these microtubule-based loops is a critical component of the process of bouton division and for subsequent nerve-terminal growth and branching. Translation is repressed by Fmr1. Together with ringer, required for neuromuscular junction (NMJ) bouton growth by regulating synaptic microtubules. Function with ringer in maintaining microtubule stability and dynamics, is essential for promoting axon regeneration in response to peripheral (PNS) and central nervous system (CNS) injury. In response to axotomy, acts downstream of a stress response cascade involving Xbp1 splicing, to control axon regeneration. The sequence is that of Microtubule-associated protein futsch (futsch) from Drosophila melanogaster (Fruit fly).